Consider the following 69-residue polypeptide: Beta-defensin 122 (69 aa).

An N-terminal signal peptide occupies residues 1–19 (MKPFLVTLAVLLLFFQVTA). Cystine bridges form between C26/C53, C33/C47, and C37/C54.

Belongs to the beta-defensin family.

It is found in the secreted. In terms of biological role, has antibacterial activity. The chain is Beta-defensin 122 (DEFB122) from Macaca mulatta (Rhesus macaque).